Reading from the N-terminus, the 304-residue chain is Cell division protein ZipA (304 aa).

Residues 1-5 lie on the Periplasmic side of the membrane; it reads MQDLR. Residues 6-26 form a helical membrane-spanning segment; that stretch reads LILIVVGAIAIIALLLHGLWT. The Cytoplasmic segment spans residues 27 to 304; that stretch reads SRKERSSVFR…IRDVIDANSH (278 aa). The interval 31–165 is disordered; sequence RSSVFRDRPH…PEPQSQPKQK (135 aa). Basic and acidic residues predominate over residues 121–132; the sequence is ARPETHKPDQPE. Over residues 137-158 the composition is skewed to low complexity; sequence AAPAAAETAPAPAEPAQKTPEP.

The protein belongs to the ZipA family. Interacts with FtsZ via their C-terminal domains.

The protein resides in the cell inner membrane. Its function is as follows. Essential cell division protein that stabilizes the FtsZ protofilaments by cross-linking them and that serves as a cytoplasmic membrane anchor for the Z ring. Also required for the recruitment to the septal ring of downstream cell division proteins. This Erwinia tasmaniensis (strain DSM 17950 / CFBP 7177 / CIP 109463 / NCPPB 4357 / Et1/99) protein is Cell division protein ZipA.